A 265-amino-acid polypeptide reads, in one-letter code: Acetylglutamate kinase (265 aa).

Substrate is bound by residues 41–42, R63, and N156; that span reads GG.

It belongs to the acetylglutamate kinase family. ArgB subfamily.

It localises to the cytoplasm. The enzyme catalyses N-acetyl-L-glutamate + ATP = N-acetyl-L-glutamyl 5-phosphate + ADP. It functions in the pathway amino-acid biosynthesis; L-arginine biosynthesis; N(2)-acetyl-L-ornithine from L-glutamate: step 2/4. Its function is as follows. Catalyzes the ATP-dependent phosphorylation of N-acetyl-L-glutamate. The chain is Acetylglutamate kinase from Oceanobacillus iheyensis (strain DSM 14371 / CIP 107618 / JCM 11309 / KCTC 3954 / HTE831).